A 507-amino-acid polypeptide reads, in one-letter code: MTNAKILVAHISESDADEAIRKIKKVNEKSGPFDLIIIFSNSYDENFELNTDGLPQLILLSCDKANNSKSKKINENVTLLHNMGTYKLANGITLSYFIYPDDTLQGEKKSILDEFGKSEDQVDILLTKEWGLSISERCGRLSGSEVVDELAKKLQARYHFAFSDEINFYELEPFQWERERLSRFLNIPKYGSGKKWAYAFNMPIGDNELKDEPEPPNLIANPYNSVVTNSNKRPLETETENSFDGDKQVLANREKNENKKIRTILPSSCHFCFSNPNLEDHMIISIGKLVYLTTAKGPLSVPKGDMDISGHCLIIPIEHIPKLDPSKNAELTQSILAYEASLVKMNYIKFDMCTIVFEIQSERSIHFHKQVIPVPKYLVLKFCSALDRQVHFNNEKFTRNAKLEFQCYDSHSSKQYVDVINNQSNNYLQFTVYETPEADPKIYLATFNASETIDLQFGRRVLAFLLNLPRRVKWNSSTCLQTKQQETIEAEKFQKAYRTYDISLTEN.

A Phosphoserine modification is found at serine 242.

This sequence belongs to the CWF19 family. Interacts with DBR1. Interacts with SYF1, a component of the NTC complex. Interacts with lariat-introns and lariat-intermediates.

The protein localises to the nucleus. Its subcellular location is the cytoplasm. Functionally, involved in branched RNA metabolism, modulating the turnover of lariat-intron pre-mRNAs by the lariat-debranching enzyme DBR1. Enhances the debranching activity of DBR1 in vitro. The chain is CWF19-like protein DRN1 (DRN1) from Saccharomyces cerevisiae (strain ATCC 204508 / S288c) (Baker's yeast).